The chain runs to 317 residues: L-lactate dehydrogenase 1 (317 aa).

NAD(+) is bound by residues valine 17, aspartate 38, lysine 43, tyrosine 69, and 83-84; that span reads GA. Positions 86 and 92 each coordinate substrate. NAD(+) contacts are provided by residues serine 105, 122-124, and serine 147; that span reads ATN. Position 124-127 (124-127) interacts with substrate; that stretch reads NPVD. Substrate is bound at residue 152-155; sequence DSAR. Catalysis depends on histidine 179, which acts as the Proton acceptor. Tyrosine 223 is modified (phosphotyrosine). Threonine 232 serves as a coordination point for substrate.

It belongs to the LDH/MDH superfamily. LDH family. As to quaternary structure, homotetramer.

Its subcellular location is the cytoplasm. It catalyses the reaction (S)-lactate + NAD(+) = pyruvate + NADH + H(+). It functions in the pathway fermentation; pyruvate fermentation to lactate; (S)-lactate from pyruvate: step 1/1. In terms of biological role, catalyzes the conversion of lactate to pyruvate (Potential). Appears to be the primary factor that allows S.aureus growth during nitrosative stress in both aerobically and anaerobically cultured cells. This is L-lactate dehydrogenase 1 from Staphylococcus aureus (strain bovine RF122 / ET3-1).